The primary structure comprises 302 residues: Protein FLOURY 1 (302 aa).

2 consecutive transmembrane segments (helical) span residues 27–47 and 82–102; these read SAGA…VAVL and LAGS…FLAV. The segment at 160 to 195 is disordered; sequence SSKPVSRSLAAEFDQEADGEEEDNAGETSDPDDGSV. Residues 172 to 192 are compositionally biased toward acidic residues; it reads FDQEADGEEEDNAGETSDPDD. In terms of domain architecture, GTD-binding spans 193–299; the sequence is GSVQYLRRRL…ALSETSEDDR (107 aa). Positions 199-254 form a coiled coil; it reads RRRLKEEMLLKEVALEELEKERHAAASAADEAMSKIACLRSEKALVEREARQFQEM. The segment at 283-302 is disordered; sequence PEAITDRALSETSEDDRDKK.

In terms of assembly, interacts (via C-terminus) with both 22 kDa and 19 kDa alpha-zeins. Interacts (via C-terminus) with OP10 (via N-terminus). In terms of tissue distribution, expressed in endosperm. Not detected in embryo, leaves and roots.

It is found in the endoplasmic reticulum membrane. Involved in protein body development and 22 kDa alpha-zein localization. The protein is Protein FLOURY 1 of Zea mays (Maize).